The primary structure comprises 141 residues: MRQNMSILPPSSFSRNFLLVRCSPIQVWKYSMNTLCTMHGWMKLYLEYQRWNCMLRLSASIELEVFMDVPIFIRTYYRPANMDDSFRYGIIFRMYDLAVQLQWGNVMKLLLVTKTQVEKKKALNLNVSKTRDGRGGLNQQG.

The protein resides in the mitochondrion. This is an uncharacterized protein from Arabidopsis thaliana (Mouse-ear cress).